Here is a 467-residue protein sequence, read N- to C-terminus: Glutamate--tRNA ligase (467 aa).

The 'HIGH' region signature appears at 15 to 25; it reads PSPTGYLHVGG. The short motif at 249-253 is the 'KMSKS' region element; it reads KLSKR. Lys-252 is a binding site for ATP.

It belongs to the class-I aminoacyl-tRNA synthetase family. Glutamate--tRNA ligase type 1 subfamily. Monomer.

It localises to the cytoplasm. It carries out the reaction tRNA(Glu) + L-glutamate + ATP = L-glutamyl-tRNA(Glu) + AMP + diphosphate. Functionally, catalyzes the attachment of glutamate to tRNA(Glu) in a two-step reaction: glutamate is first activated by ATP to form Glu-AMP and then transferred to the acceptor end of tRNA(Glu). The polypeptide is Glutamate--tRNA ligase (Coprothermobacter proteolyticus (strain ATCC 35245 / DSM 5265 / OCM 4 / BT)).